A 300-amino-acid polypeptide reads, in one-letter code: Lysophosphatidic acid:oleoyl-CoA acyltransferase 1 (300 aa).

A helical membrane pass occupies residues 33–53; sequence LLGILGVKTIIMLPLIMLYLL. The HXXXXD motif signature appears at 101-106; sequence CTSPLD.

The protein belongs to the 1-acyl-sn-glycerol-3-phosphate acyltransferase family.

The protein resides in the lipid droplet. It localises to the endoplasmic reticulum membrane. The catalysed reaction is a 1-acyl-sn-glycero-3-phosphate + an acyl-CoA = a 1,2-diacyl-sn-glycero-3-phosphate + CoA. It catalyses the reaction 1-hexadecanoyl-sn-glycero-3-phosphate + (9Z)-octadecenoyl-CoA = 1-hexadecanoyl-2-(9Z-octadecenoyl)-sn-glycero-3-phosphate + CoA. Acyl-CoA-dependent lysophosphatidic acid acyltransferase with preference for oleoyl-CoA. Involved in triacylglyceride homeostasis and lipid droplet formation. Involved in vacuolar protein sorting. The chain is Lysophosphatidic acid:oleoyl-CoA acyltransferase 1 from Saccharomyces cerevisiae (strain ATCC 204508 / S288c) (Baker's yeast).